The following is a 148-amino-acid chain: MLQLANRSVRAKAARASQSARSVSCAAAKRGADVAPLTSALAVTASILLTTGAASASAADLALGAQVFNGNCAACHMGGRNSVMPEKTLDKAALEQYLDGGFKVESIIYQVENGKGAMPAWADRLSEEEIQAVAEYVFKQATDAAWKY.

A chloroplast-targeting transit peptide spans 1 to 58 (MLQLANRSVRAKAARASQSARSVSCAAAKRGADVAPLTSALAVTASILLTTGAASASA). C72, C75, H76, and M118 together coordinate heme c.

It belongs to the cytochrome c family. PetJ subfamily. Thought to function as a monomer, however 2 crystal forms are observed; a homodimer and homotrimer, suggesting the protein oligomerizes. Binds 1 heme c group covalently per subunit.

Its subcellular location is the plastid. The protein resides in the chloroplast thylakoid lumen. Its function is as follows. Functions as an electron carrier between membrane-bound cytochrome b6-f and photosystem I in oxygenic photosynthesis. This is Cytochrome c6, chloroplastic (petJ) from Chlamydomonas reinhardtii (Chlamydomonas smithii).